A 321-amino-acid polypeptide reads, in one-letter code: NADH-ubiquinone oxidoreductase chain 1 (321 aa).

The next 8 helical transmembrane spans lie at 5–25 (LVTLNSLMYIIPILIAVAFLT), 74–94 (LLILSPLLAITAAMLIWAPIP), 104–124 (LGLLSILAISGMAVNSILWAG), 151–171 (GIILLSTLVLTGGFTIQLLTI), 175–195 (YTWLLTTSWPLTMMWFISTLA), 227–247 (FFLAEYANIITMNLLTCILFI), 256–276 (ELFLANLIAKTTILCLSFLWI), and 296–316 (FLPMTMALCLLHASLSISISG).

The protein belongs to the complex I subunit 1 family.

It localises to the mitochondrion inner membrane. It carries out the reaction a ubiquinone + NADH + 5 H(+)(in) = a ubiquinol + NAD(+) + 4 H(+)(out). Functionally, core subunit of the mitochondrial membrane respiratory chain NADH dehydrogenase (Complex I) that is believed to belong to the minimal assembly required for catalysis. Complex I functions in the transfer of electrons from NADH to the respiratory chain. The immediate electron acceptor for the enzyme is believed to be ubiquinone. This Varanus baritji (Black-spotted ridge-tailed monitor) protein is NADH-ubiquinone oxidoreductase chain 1 (MT-ND1).